The primary structure comprises 101 residues: Small ribosomal subunit protein uS14 (101 aa).

The protein belongs to the universal ribosomal protein uS14 family. In terms of assembly, part of the 30S ribosomal subunit. Contacts proteins S3 and S10.

Its function is as follows. Binds 16S rRNA, required for the assembly of 30S particles and may also be responsible for determining the conformation of the 16S rRNA at the A site. The protein is Small ribosomal subunit protein uS14 of Maricaulis maris (strain MCS10) (Caulobacter maris).